The primary structure comprises 130 residues: Putative transposase for insertion sequence element IS6501 (130 aa).

It belongs to the transposase 11 family.

Functionally, involved in the transposition of the insertion sequence. In Brucella ovis (strain ATCC 25840 / 63/290 / NCTC 10512), this protein is Putative transposase for insertion sequence element IS6501.